We begin with the raw amino-acid sequence, 34 residues long: Colipase (34 aa).

2 disulfides stabilise this stretch: Cys12–Cys23 and Cys18–Cys34.

It belongs to the colipase family. In terms of assembly, forms a 1:1 stoichiometric complex with pancreatic lipase. Expressed by the pancreas.

The protein resides in the secreted. In terms of biological role, colipase is a cofactor of pancreatic lipase. It allows the lipase to anchor itself to the lipid-water interface. Without colipase the enzyme is washed off by bile salts, which have an inhibitory effect on the lipase. The polypeptide is Colipase (CLPS) (Gallus gallus (Chicken)).